A 160-amino-acid polypeptide reads, in one-letter code: Transcription elongation factor GreA (160 aa).

The stretch at 1–72 (MAEKTYVMTL…QIQILETKIR (72 aa)) forms a coiled coil.

Belongs to the GreA/GreB family.

Functionally, necessary for efficient RNA polymerase transcription elongation past template-encoded arresting sites. The arresting sites in DNA have the property of trapping a certain fraction of elongating RNA polymerases that pass through, resulting in locked ternary complexes. Cleavage of the nascent transcript by cleavage factors such as GreA or GreB allows the resumption of elongation from the new 3'terminus. GreA releases sequences of 2 to 3 nucleotides. The polypeptide is Transcription elongation factor GreA (Streptococcus thermophilus (strain CNRZ 1066)).